We begin with the raw amino-acid sequence, 174 residues long: NADH-ubiquinone oxidoreductase chain 6 (174 aa).

4 helical membrane-spanning segments follow: residues 24 to 44, 53 to 73, 82 to 102, and 143 to 163; these read LALG…TGLM, ILFL…TSLA, MKLT…SFIM, and FITI…VKIT.

It belongs to the complex I subunit 6 family.

The protein localises to the mitochondrion membrane. It catalyses the reaction a ubiquinone + NADH + 5 H(+)(in) = a ubiquinol + NAD(+) + 4 H(+)(out). Its function is as follows. Core subunit of the mitochondrial membrane respiratory chain NADH dehydrogenase (Complex I) that is believed to belong to the minimal assembly required for catalysis. Complex I functions in the transfer of electrons from NADH to the respiratory chain. The immediate electron acceptor for the enzyme is believed to be ubiquinone. This Drosophila melanogaster (Fruit fly) protein is NADH-ubiquinone oxidoreductase chain 6 (mt:ND6).